A 380-amino-acid chain; its full sequence is RNA binding protein fox-1 homolog 2 (380 aa).

Polar residues-rich tracts occupy residues 1–20 (MEKNKMVSQGNQEPTATPDT) and 36–56 (NGLSTDYGSQHTQEYATQSTE). Positions 1–117 (MEKNKMVSQG…TPKRLHVSNI (117 aa)) are disordered. Residues 72-102 (STPATSTANASSTTDGSQTEGQQSQTQNSEN) show a composition bias toward low complexity. The 77-residue stretch at 110-186 (KRLHVSNIPF…RKIEVNNATA (77 aa)) folds into the RRM domain.

The protein localises to the nucleus. Its subcellular location is the cytoplasm. RNA-binding protein that regulates alternative splicing events by binding to 5'-UGCAUGU-3' elements. Regulates alternative splicing of tissue-specific exons. In Xenopus tropicalis (Western clawed frog), this protein is RNA binding protein fox-1 homolog 2 (rbfox2).